A 173-amino-acid chain; its full sequence is Mesencephalic astrocyte-derived neurotrophic factor homolog (173 aa).

Residues 1–22 form the signal peptide; sequence MKTWYMVVVIGFLATLVQTSLA. Cystine bridges form between Cys-28–Cys-114, Cys-31–Cys-103, Cys-61–Cys-72, and Cys-148–Cys-151.

It belongs to the ARMET family.

It localises to the secreted. Functionally, required during the maturation of the embryonic nervous system for maintenance of neuronal and cuticular connectivity. Essential for maintenance of dopaminergic neurons and dopamine levels. In Drosophila yakuba (Fruit fly), this protein is Mesencephalic astrocyte-derived neurotrophic factor homolog.